Here is a 142-residue protein sequence, read N- to C-terminus: Hemoglobin subunit alpha-1 (142 aa).

S1 bears the N-acetylserine mark. The Globin domain maps to 1–142 (SLSDKDKAAV…VALALAQRYR (142 aa)). H59 lines the O2 pocket. Position 88 (H88) interacts with heme b.

It belongs to the globin family. As to quaternary structure, hb1 is a heterotetramer of two alpha-2 chains and two beta chains. Red blood cells.

Its function is as follows. Involved in oxygen transport from gills to the various peripheral tissues. This is Hemoglobin subunit alpha-1 (hba1) from Notothenia neglecta (Yellowbelly rockcod).